Reading from the N-terminus, the 472-residue chain is Violaxanthin de-epoxidase, chloroplastic (472 aa).

6 disulfide bridges follow: cysteine 133-cysteine 151, cysteine 138-cysteine 145, cysteine 157-cysteine 174, cysteine 161-cysteine 170, cysteine 189-cysteine 196, and cysteine 242-cysteine 372. Residues 379–462 are a coiled coil; it reads VERLEKTVEE…MEAGEVEKLF (84 aa).

It belongs to the calycin superfamily. Lipocalin family. Disulfide bonds. Reduction of the disulfides results in loss of a rigid structure, a decrease in thermal stability of 15 degrees Celsius and a loss of activity.

It is found in the plastid. It localises to the chloroplast thylakoid membrane. The enzyme catalyses all-trans-violaxanthin + 2 L-ascorbate = all-trans-zeaxanthin + 2 L-dehydroascorbate + 2 H2O. Its activity is regulated as follows. Irreversibly inhibited by DTT and iodoacetamide at pH 5.7 or pH 5.2, but not at pH 7.2. Regulated through Ca(2+) gating of H(+) flux at the CFoH(+) channel. Requires the presence of lipids forming reverse hexagonal structures such as monogalactosyldiacylglyceride (MGDG) or phosphatidylethanolamine. A negative curvature elastic stress in the thylakoid lipid bilayer is required for VDE1 activity. In terms of biological role, part of the xanthophyll (or violaxanthin) cycle for controlling the concentration of zeaxanthin in chloroplasts. Catalyzes the two-step mono de-epoxidation reaction. Stereospecific for all-trans xanthophylls. Zeaxanthin induces the dissipation of excitation energy in the chlorophyll of the light-harvesting protein complex of photosystem II. In Spinacia oleracea (Spinach), this protein is Violaxanthin de-epoxidase, chloroplastic.